The following is a 44-amino-acid chain: Diuretic hormone (44 aa).

The residue at position 44 (valine 44) is a Valine amide.

The protein resides in the secreted. Regulation of fluid secretion. Stimulates primary urine secretion by Malpighian tubules and causes a dose-dependent stimulation of cAMP levels in the tubules. May act as clearance peptide in that it may remove metabolic waste from the hemolymph. In Stomoxys calcitrans (Stable fly), this protein is Diuretic hormone.